A 577-amino-acid polypeptide reads, in one-letter code: Eukaryotic translation initiation factor 3 subunit D (577 aa).

Residues 103–177 form a disordered region; sequence DSTKTRFGRG…KDYDKPQRNR (75 aa). Residues 166–177 show a composition bias toward basic and acidic residues; the sequence is GWKDYDKPQRNR. The interval 305–319 is RNA gate; sequence TLDMVTVNENAADAP. A disordered region spans residues 558 to 577; it reads GSFEDDGEGDVIEENVEEED. Positions 560 to 577 are enriched in acidic residues; it reads FEDDGEGDVIEENVEEED.

This sequence belongs to the eIF-3 subunit D family. As to quaternary structure, component of the eukaryotic translation initiation factor 3 (eIF-3) complex.

The protein resides in the cytoplasm. Its function is as follows. mRNA cap-binding component of the eukaryotic translation initiation factor 3 (eIF-3) complex, which is involved in protein synthesis of a specialized repertoire of mRNAs and, together with other initiation factors, stimulates binding of mRNA and methionyl-tRNAi to the 40S ribosome. The eIF-3 complex specifically targets and initiates translation of a subset of mRNAs involved in cell proliferation. In the eIF-3 complex, eif3d specifically recognizes and binds the 7-methylguanosine cap of a subset of mRNAs. In Sclerotinia sclerotiorum (strain ATCC 18683 / 1980 / Ss-1) (White mold), this protein is Eukaryotic translation initiation factor 3 subunit D.